The sequence spans 628 residues: Phomenoic acid biosynthesis cluster MFS-type transporter (628 aa).

Helical transmembrane passes span 102–122, 150–170, 174–194, 204–224, 232–252, 262–282, 302–322, 329–349, 375–395, 407–427, 435–455, 488–508, 524–544, and 595–615; these read IHGF…FLYA, VGFV…YGIL, WLYI…GAAP, VFAG…LSIN, AYLS…PVIG, WAFY…FFLL, FVGA…INFG, NSGT…AFAV, MLLF…IYFI, ALDS…TILV, FGYY…ANVF, GFEA…YAVI, IMIA…AVFI, and AKAF…SLGF.

The protein belongs to the major facilitator superfamily. TCR/Tet family.

The protein resides in the cell membrane. Functionally, MFS-type transporter; part of the gene cluster that mediates the biosynthesis of phomenoic acid, a long chain aliphatic carboxylic acid that does not appear to be essential for pathogenicity but may play a role in allowing to outcompete other fungi in the environmental niche via its antifungal properties. Is probably involved in the efflux of phomenoic acid. The protein is Phomenoic acid biosynthesis cluster MFS-type transporter of Leptosphaeria maculans (strain JN3 / isolate v23.1.3 / race Av1-4-5-6-7-8) (Blackleg fungus).